Here is a 378-residue protein sequence, read N- to C-terminus: MSKRDFYEILGVSKTADNKEIKRAYRKLAMKYHPDRNSEDPDAEEKFKEASMAYEVLSSEEKRSAYDRMGHAAFENGMGGGGFGGGGGGNFQDIFGDIFGNFGDIFGQSRGGGGGRSRRGSDLRYVIELTLEEAVRGCKKEISFTAPAPCDTCDGKGAKNASDIVTCQTCHGQGQVRMQQGFFAVQQACPHCGGTGKQIKNPCSDCHGNGVKDKSRTLEVSIPAGVDDGDRVRLAGEGEAGGAGVQNGDLYVEVRVKQHNVFTRQGADLYMDVPVSITDAALGKEVEIPTLDGKVKIKVAEGTQSGKLLRVRGRGVTPVRTTMKGDLICRVVIETPVNLTREQKDLLRQFQDTLDGDSKHQQSPHKKSFFKKIGDLFD.

One can recognise a J domain in the interval 5 to 70; it reads DFYEILGVSK…EKRSAYDRMG (66 aa). The CR-type zinc-finger motif lies at 137–215; the sequence is GCKKEISFTA…CHGNGVKDKS (79 aa). Zn(2+)-binding residues include cysteine 150, cysteine 153, cysteine 167, cysteine 170, cysteine 189, cysteine 192, cysteine 203, and cysteine 206. 4 CXXCXGXG motif repeats span residues 150-157, 167-174, 189-196, and 203-210; these read CDTCDGKG, CQTCHGQG, CPHCGGTG, and CSDCHGNG.

This sequence belongs to the DnaJ family. In terms of assembly, homodimer. Requires Zn(2+) as cofactor.

The protein localises to the cytoplasm. Functionally, participates actively in the response to hyperosmotic and heat shock by preventing the aggregation of stress-denatured proteins and by disaggregating proteins, also in an autonomous, DnaK-independent fashion. Unfolded proteins bind initially to DnaJ; upon interaction with the DnaJ-bound protein, DnaK hydrolyzes its bound ATP, resulting in the formation of a stable complex. GrpE releases ADP from DnaK; ATP binding to DnaK triggers the release of the substrate protein, thus completing the reaction cycle. Several rounds of ATP-dependent interactions between DnaJ, DnaK and GrpE are required for fully efficient folding. Also involved, together with DnaK and GrpE, in the DNA replication of plasmids through activation of initiation proteins. This chain is Chaperone protein DnaJ, found in Psychrobacter cryohalolentis (strain ATCC BAA-1226 / DSM 17306 / VKM B-2378 / K5).